Here is a 423-residue protein sequence, read N- to C-terminus: UPF0229 protein PSPA7_0730 (423 aa).

Positions 84-107 (AGEHIARPSGGGGGRGGGKASNSG) are disordered. The segment covering 92-102 (SGGGGGRGGGK) has biased composition (gly residues).

It belongs to the UPF0229 family.

The polypeptide is UPF0229 protein PSPA7_0730 (Pseudomonas paraeruginosa (strain DSM 24068 / PA7) (Pseudomonas aeruginosa (strain PA7))).